The primary structure comprises 182 residues: Chromophore lyase CpcS/CpeS (182 aa).

Belongs to the CpcS/CpeS biliprotein lyase family.

In terms of biological role, covalently attaches a chromophore to Cys residue(s) of phycobiliproteins. The chain is Chromophore lyase CpcS/CpeS from Thermosynechococcus vestitus (strain NIES-2133 / IAM M-273 / BP-1).